Here is a 245-residue protein sequence, read N- to C-terminus: Transmembrane protein 116 (245 aa).

The next 4 membrane-spanning stretches (helical) occupy residues 24–44 (MAFV…FCLG), 88–108 (GIAI…VLLI), 141–161 (FYPV…IIKL), and 173–195 (LYVL…YGWT).

Its subcellular location is the membrane. In Homo sapiens (Human), this protein is Transmembrane protein 116 (TMEM116).